The primary structure comprises 361 residues: Cyclic AMP receptor-like protein C (361 aa).

Residues 1 to 18 (MGIEESQICNPSDREFLS) lie on the Extracellular side of the membrane. The chain crosses the membrane as a helical span at residues 19–39 (VDILNIVTSSLSLMGSALTII). Residues 40–113 (SYIWKKVRRH…HGTYKQPTSK (74 aa)) are Cytoplasmic-facing. The helical transmembrane segment at 114–134 (LPLLIFMLSIADFFTSFFIII) threads the bilayer. The Extracellular segment spans residues 135–166 (SQSYLINNSKSYSTPYSPDLKIHFSPCIILRA). A helical membrane pass occupies residues 167–187 (IIQFFFLSTFFWTTCISYYLF). At 188–197 (HQLSSPGEEK) the chain is on the cytoplasmic side. Residues 198–218 (YLLAIFNVVSWGIPFAISMVI) form a helical membrane-spanning segment. Topologically, residues 219–238 (TMTNSIVVNSDGWCEVAKPM) are extracellular. Residues 239 to 259 (ELSLWFLPLFLCLLVCSIYYF) traverse the membrane as a helical segment. Residues 260–292 (RLRRLFRSKFEYRLQINDRLKQLDSTISRRLTL) are Cytoplasmic-facing. The chain crosses the membrane as a helical span at residues 293 to 313 (YIVVFVICWLPDVIQHFISFF). At 314–318 (SKCTF) the chain is on the extracellular side. The chain crosses the membrane as a helical span at residues 319–339 (FPLLILQNILTPSQGFWNFWI). Over 340–361 (YSYTNKIARFTPSNDENKRLLQ) the chain is Cytoplasmic.

Belongs to the G-protein coupled receptor 5 family.

It is found in the membrane. Receptor for cAMP. In Dictyostelium discoideum (Social amoeba), this protein is Cyclic AMP receptor-like protein C (crlC).